We begin with the raw amino-acid sequence, 206 residues long: Thymidylate kinase (206 aa).

10–17 (GIDGAGKS) is a binding site for ATP.

The protein belongs to the thymidylate kinase family.

The catalysed reaction is dTMP + ATP = dTDP + ADP. Phosphorylation of dTMP to form dTDP in both de novo and salvage pathways of dTTP synthesis. This chain is Thymidylate kinase (tmk), found in Neisseria meningitidis serogroup A / serotype 4A (strain DSM 15465 / Z2491).